Reading from the N-terminus, the 436-residue chain is Prenyltransferase nscD (436 aa).

It belongs to the tryptophan dimethylallyltransferase family.

The protein operates within secondary metabolite biosynthesis. Functionally, prenyltransferase; part of the gene cluster that mediates the biosynthesis of neosartoricin B, a prenylated anthracenone that probably exhibits T-cell antiproliferative activity, suggestive of a physiological role as an immunosuppressive agent. The non-reducing polyketide synthase nscA probably synthesizes and cyclizes the decaketide backbone. The hydrolase nscB then mediates the product release through hydrolysis followed by spontaneous decarboxylation. The prenyltransferase nscD catalyzes the addition of the dimethylallyl group to the aromatic C5. The FAD-dependent monooxygenase nscC is then responsible for the stereospecific hydroxylation at C2. Neosartoricin B can be converted into two additional compounds neosartoricins C and D. Neosartoricin C is a spirocyclic compound that is cyclized through the attack of C3 hydroxyl on C14, followed by dehydration. On the other hand, neosartoricin D is a further cyclized compound in which attack of C2 on C14 in neosartoricin C results in the formation of the acetal-containing dioxabicyclo-octanone ring. Both of these compounds are novel and possibly represent related metabolites of the gene cluster. The protein is Prenyltransferase nscD of Trichophyton rubrum (strain ATCC MYA-4607 / CBS 118892) (Athlete's foot fungus).